The sequence spans 191 residues: GTP-dependent dephospho-CoA kinase (191 aa).

Asp46, Asp65, Lys67, and Glu122 together coordinate GTP.

The protein belongs to the GTP-dependent DPCK family.

It catalyses the reaction 3'-dephospho-CoA + GTP = GDP + CoA + H(+). It participates in cofactor biosynthesis; coenzyme A biosynthesis. Functionally, catalyzes the GTP-dependent phosphorylation of the 3'-hydroxyl group of dephosphocoenzyme A to form coenzyme A (CoA). The chain is GTP-dependent dephospho-CoA kinase from Methanopyrus kandleri (strain AV19 / DSM 6324 / JCM 9639 / NBRC 100938).